Reading from the N-terminus, the 113-residue chain is U11-theraphotoxin-Hhn1f (113 aa).

Residues M1 to A21 form the signal peptide. Residues D22–R74 constitute a propeptide that is removed on maturation. Positions E61–D83 are disordered. Disulfide bonds link C75–C90, C82–C95, and C89–C110.

It belongs to the neurotoxin 14 (magi-1) family. 01 (HNTX-16) subfamily. Expressed by the venom gland.

It localises to the secreted. Its function is as follows. Probable ion channel inhibitor. This is U11-theraphotoxin-Hhn1f from Cyriopagopus hainanus (Chinese bird spider).